A 622-amino-acid chain; its full sequence is Cell pattern formation-associated protein stuA (622 aa).

Disordered regions lie at residues 1–24 (MASM…QTYA) and 62–81 (YPNS…SISS). Residues 129–235 (RVTATLWEDE…QHISNLLYHP (107 aa)) form the HTH APSES-type domain. The H-T-H motif DNA-binding region spans 163-184 (GTKLLNVAGMTRGRRDGILKSE). 2 disordered regions span residues 239 to 517 (NQRN…TPPR) and 549 to 622 (SNSG…SARR). 3 stretches are compositionally biased toward polar residues: residues 274 to 283 (LQTPVPSHMS), 302 to 345 (ASAS…ARSM), and 355 to 370 (GNNL…QSGY). The segment covering 384-395 (PQYAPQQPLPQQ) has biased composition (low complexity). 4 stretches are compositionally biased toward polar residues: residues 404–421 (MPTS…QRGS), 455–470 (SGYN…TNPS), 480–506 (QLTP…NTAP), and 549–563 (SNSG…SMGS). The interval 565–590 (KRMRDDDDDRIVPPDSRGEFDTKRRK) is nuclear localization domain. The segment covering 566 to 586 (RMRDDDDDRIVPPDSRGEFDT) has biased composition (basic and acidic residues).

It belongs to the EFG1/PHD1/stuA family.

It is found in the nucleus. Functionally, transcription factor that regulates asexual reproduction. Binds the StuA-response elements (StRE) with the consensus sequence 5'-(A/T)CGCG(T/A)N(A/C)-3' at the promoters of target genes. Required from the very earliest events of asexual reproduction until completion of conidiophore development, but is not specifically required for differentiation of conidia. Represses transcription of the abaA developmental regulatory gene and of the developmentally regulated awh11 gene. Controls the expression of the catalase-peroxidase gene cpeA. Plays an important role in cell wall biogenesis during the development by controlling the transcription level of fksA. The protein is Cell pattern formation-associated protein stuA of Emericella nidulans (strain FGSC A4 / ATCC 38163 / CBS 112.46 / NRRL 194 / M139) (Aspergillus nidulans).